The primary structure comprises 1284 residues: Collagen alpha-1(XX) chain (1284 aa).

A signal peptide spans 1–22; sequence MSSGDPAHLGLCLWLWLGATLG. In terms of domain architecture, Fibronectin type-III 1 spans 28 to 119; that stretch reads ASGLLRLAVL…EFVIEDLKSS (92 aa). Positions 122-171 are disordered; that stretch reads DRSSQRPLGSGAPEPTPSHTGSPDPEQASEPQVAFTPSQDPRTPAGPQFR. Residues 179 to 354 enclose the VWFA domain; sequence DMVFLVDGSW…GALAGLLSRL (176 aa). Fibronectin type-III domains lie at 379–468, 469–559, 560–647, 649–738, and 743–833; these read APTS…APLP, PPRA…TLAP, PRHL…TKKA, SPSQ…TPST, and PPSN…ACPA. Asn607 carries N-linked (GlcNAc...) asparagine glycosylation. In terms of domain architecture, Laminin G-like spans 842–1037; sequence GFDLMVAFSL…LQMLQIVCSD (196 aa). Disordered regions lie at residues 1065-1190 and 1212-1284; these read SCSS…EKGE and SFHE…GLWE. The segment covering 1071–1082 has biased composition (pro residues); it reads PGPPGPQGPPGL. 2 Collagen-like domains span residues 1071-1127 and 1133-1190; these read PGPP…IPGR and PKGM…EKGE. 2 stretches are compositionally biased toward low complexity: residues 1112-1125 and 1166-1181; these read LPGL…QGIP and ERGP…LPGP. A compositionally biased stretch (polar residues) spans 1271 to 1284; that stretch reads SPGQQGASTQGLWE.

As to expression, high expression in heart, lung, liver, skeletal muscle, kidney, pancreas, spleen, testis, ovary, subthalamic nucleus and fetal liver. Weak expression in other tissues tested.

It is found in the secreted. The protein resides in the extracellular space. Probable collagen protein. In Homo sapiens (Human), this protein is Collagen alpha-1(XX) chain (COL20A1).